The chain runs to 178 residues: Large ribosomal subunit protein uL6 (178 aa).

The protein belongs to the universal ribosomal protein uL6 family. Part of the 50S ribosomal subunit.

Functionally, this protein binds to the 23S rRNA, and is important in its secondary structure. It is located near the subunit interface in the base of the L7/L12 stalk, and near the tRNA binding site of the peptidyltransferase center. This chain is Large ribosomal subunit protein uL6, found in Oenococcus oeni (strain ATCC BAA-331 / PSU-1).